A 125-amino-acid polypeptide reads, in one-letter code: Histone H2A (125 aa).

Positions 1–18 (MSGRGKGGKARAKAKSRS) are enriched in basic residues. Residues 1–21 (MSGRGKGGKARAKAKSRSSRA) form a disordered region. S2 is modified (N-acetylserine). A Phosphoserine modification is found at S2. Q104 is subject to N5-methylglutamine.

Belongs to the histone H2A family. In terms of assembly, the nucleosome is a histone octamer containing two molecules each of H2A, H2B, H3 and H4 assembled in one H3-H4 heterotetramer and two H2A-H2B heterodimers. The octamer wraps approximately 147 bp of DNA.

It localises to the nucleus. The protein localises to the chromosome. Its function is as follows. Core component of nucleosome. Nucleosomes wrap and compact DNA into chromatin, limiting DNA accessibility to the cellular machineries which require DNA as a template. Histones thereby play a central role in transcription regulation, DNA repair, DNA replication and chromosomal stability. DNA accessibility is regulated via a complex set of post-translational modifications of histones, also called histone code, and nucleosome remodeling. This is Histone H2A from Asterias rubens (Common European starfish).